The following is a 317-amino-acid chain: Polysulfide reductase chain C (317 aa).

The next 8 membrane-spanning stretches (helical) occupy residues 20 to 40, 54 to 75, 98 to 118, 147 to 167, 182 to 202, 221 to 237, 259 to 279, and 289 to 309; these read IAVY…AIII, IIKA…LLIF, LGVL…LGVF, IVTF…LSAM, FLAS…LLFF, VILF…VGMY, LFWL…NVAL, and FVML…FYIL.

This sequence belongs to the NrfD family. As to quaternary structure, functional polysulfide reductase is made up of three different (A, B, and C) subunits.

Its subcellular location is the cell inner membrane. Its function is as follows. Could possibly serve as the membrane anchor of the enzyme. Functionally, component of the phosphorylative electron transport system with polysulfide as the terminal acceptor. The sequence is that of Polysulfide reductase chain C (psrC) from Wolinella succinogenes (strain ATCC 29543 / DSM 1740 / CCUG 13145 / JCM 31913 / LMG 7466 / NCTC 11488 / FDC 602W) (Vibrio succinogenes).